We begin with the raw amino-acid sequence, 472 residues long: Argininosuccinate lyase (472 aa).

The protein belongs to the lyase 1 family. Argininosuccinate lyase subfamily.

The protein localises to the cytoplasm. The catalysed reaction is 2-(N(omega)-L-arginino)succinate = fumarate + L-arginine. It participates in amino-acid biosynthesis; L-arginine biosynthesis; L-arginine from L-ornithine and carbamoyl phosphate: step 3/3. The polypeptide is Argininosuccinate lyase (Polynucleobacter asymbioticus (strain DSM 18221 / CIP 109841 / QLW-P1DMWA-1) (Polynucleobacter necessarius subsp. asymbioticus)).